Consider the following 181-residue polypeptide: Ribosome-recycling factor (181 aa).

The tract at residues 135–160 (MDDIKKDKDMPEDDARKAEDQTQKLT) is disordered.

It belongs to the RRF family.

The protein localises to the cytoplasm. Responsible for the release of ribosomes from messenger RNA at the termination of protein biosynthesis. May increase the efficiency of translation by recycling ribosomes from one round of translation to another. This is Ribosome-recycling factor from Leuconostoc mesenteroides subsp. mesenteroides (strain ATCC 8293 / DSM 20343 / BCRC 11652 / CCM 1803 / JCM 6124 / NCDO 523 / NBRC 100496 / NCIMB 8023 / NCTC 12954 / NRRL B-1118 / 37Y).